Here is an 87-residue protein sequence, read N- to C-terminus: uncharacterized protein (87 aa).

This sequence to A.fulgidus AF_1348 and AF_1363.

This is an uncharacterized protein from Archaeoglobus fulgidus (strain ATCC 49558 / DSM 4304 / JCM 9628 / NBRC 100126 / VC-16).